Here is a 103-residue protein sequence, read N- to C-terminus: Co-chaperonin GroES (103 aa).

Belongs to the GroES chaperonin family. In terms of assembly, heptamer of 7 subunits arranged in a ring. Interacts with the chaperonin GroEL.

It localises to the cytoplasm. Its function is as follows. Together with the chaperonin GroEL, plays an essential role in assisting protein folding. The GroEL-GroES system forms a nano-cage that allows encapsulation of the non-native substrate proteins and provides a physical environment optimized to promote and accelerate protein folding. GroES binds to the apical surface of the GroEL ring, thereby capping the opening of the GroEL channel. The polypeptide is Co-chaperonin GroES (Thermosynechococcus vestitus (strain NIES-2133 / IAM M-273 / BP-1)).